The sequence spans 1062 residues: Carbamoyl phosphate synthase large chain (1062 aa).

The carboxyphosphate synthetic domain stretch occupies residues 1-401; that stretch reads MPKRTDIHKI…AMQKAVRSLE (401 aa). ATP contacts are provided by arginine 129, arginine 169, glycine 175, glycine 176, lysine 208, isoleucine 210, glutamate 215, glycine 241, isoleucine 242, histidine 243, glutamine 284, and glutamate 298. The ATP-grasp 1 domain occupies 133 to 327; sequence KELCKELGEP…IAKMAAKIAI (195 aa). The Mg(2+) site is built by glutamine 284, glutamate 298, and asparagine 300. Residues glutamine 284, glutamate 298, and asparagine 300 each contribute to the Mn(2+) site. Residues 402–546 form an oligomerization domain region; the sequence is IDEKDLYSET…YSTYDGENES (145 aa). The tract at residues 547-929 is carbamoyl phosphate synthetic domain; the sequence is HKSGKKSVIV…ALYKAFAGAK (383 aa). An ATP-grasp 2 domain is found at 671–861; the sequence is DQIIKKLKLN…MAQVATRVIM (191 aa). ATP-binding residues include arginine 707, aspartate 746, leucine 748, glutamate 752, glycine 777, valine 778, histidine 779, serine 780, glutamine 820, and glutamate 832. 3 residues coordinate Mg(2+): glutamine 820, glutamate 832, and asparagine 834. Residues glutamine 820, glutamate 832, and asparagine 834 each contribute to the Mn(2+) site. The MGS-like domain occupies 930 to 1062; the sequence is MQLPENGNVL…NRSFATDALK (133 aa). The interval 930–1062 is allosteric domain; that stretch reads MQLPENGNVL…NRSFATDALK (133 aa).

The protein belongs to the CarB family. As to quaternary structure, composed of two chains; the small (or glutamine) chain promotes the hydrolysis of glutamine to ammonia, which is used by the large (or ammonia) chain to synthesize carbamoyl phosphate. Tetramer of heterodimers (alpha,beta)4. Requires Mg(2+) as cofactor. The cofactor is Mn(2+).

It catalyses the reaction hydrogencarbonate + L-glutamine + 2 ATP + H2O = carbamoyl phosphate + L-glutamate + 2 ADP + phosphate + 2 H(+). The enzyme catalyses hydrogencarbonate + NH4(+) + 2 ATP = carbamoyl phosphate + 2 ADP + phosphate + 2 H(+). Its pathway is amino-acid biosynthesis; L-arginine biosynthesis; carbamoyl phosphate from bicarbonate: step 1/1. It functions in the pathway pyrimidine metabolism; UMP biosynthesis via de novo pathway; (S)-dihydroorotate from bicarbonate: step 1/3. Large subunit of the glutamine-dependent carbamoyl phosphate synthetase (CPSase). CPSase catalyzes the formation of carbamoyl phosphate from the ammonia moiety of glutamine, carbonate, and phosphate donated by ATP, constituting the first step of 2 biosynthetic pathways, one leading to arginine and/or urea and the other to pyrimidine nucleotides. The large subunit (synthetase) binds the substrates ammonia (free or transferred from glutamine from the small subunit), hydrogencarbonate and ATP and carries out an ATP-coupled ligase reaction, activating hydrogencarbonate by forming carboxy phosphate which reacts with ammonia to form carbamoyl phosphate. The sequence is that of Carbamoyl phosphate synthase large chain from Lactobacillus johnsonii (strain CNCM I-12250 / La1 / NCC 533).